Reading from the N-terminus, the 291-residue chain is ATP synthase gamma chain (291 aa).

The protein belongs to the ATPase gamma chain family. As to quaternary structure, F-type ATPases have 2 components, CF(1) - the catalytic core - and CF(0) - the membrane proton channel. CF(1) has five subunits: alpha(3), beta(3), gamma(1), delta(1), epsilon(1). CF(0) has three main subunits: a, b and c.

It localises to the cell membrane. In terms of biological role, produces ATP from ADP in the presence of a proton gradient across the membrane. The gamma chain is believed to be important in regulating ATPase activity and the flow of protons through the CF(0) complex. The chain is ATP synthase gamma chain from Streptococcus pyogenes serotype M1.